Here is a 458-residue protein sequence, read N- to C-terminus: MSQNKLWGGRFTQPTDKFVEEFTASIDFDKRLYHQDIRGSVAHARMLGRQGIIPQQDVEQIVHGLKDILAQIEAGQFDFSVGLEDIHMNIEARLSQKIGEAGKRLHTGRSRNDQVALDIRLYLRDEIVEVVAYLDMLIDSLLEQAEKNLEVVMPGFTHLQSAQPILFSHHMLAYVEMFKRDKGRMDDCLKRVNVLPLGAGALAGTTFPIDREYVAEQLDFPAVTRNSLDSVSDRDFALEFIAASSILMMHLSRLSEELIIWSTSAFRFVDLSDGFCTGSSIMPQKKNPDVPELVRGKTGRVYGNLMALLTVMKALPLAYNKDMQEDKEPLFDTIDTVKGSLKIFADMIREMRVNSSSMGRAAGQGFSTATDVADYLVRKGLPFRDAHEAVGKAVAYCVENEMDIIDLSLAEWQLFSPHFSDDIFAAITVEASVNARDVIGGTARNRVEDEIRRCREGK.

This sequence belongs to the lyase 1 family. Argininosuccinate lyase subfamily.

The protein localises to the cytoplasm. The catalysed reaction is 2-(N(omega)-L-arginino)succinate = fumarate + L-arginine. The protein operates within amino-acid biosynthesis; L-arginine biosynthesis; L-arginine from L-ornithine and carbamoyl phosphate: step 3/3. This chain is Argininosuccinate lyase, found in Trichlorobacter lovleyi (strain ATCC BAA-1151 / DSM 17278 / SZ) (Geobacter lovleyi).